Consider the following 71-residue polypeptide: MQQPSQPTRESTKKPVPFQHEEYPCQNQQRSSTLYVLICLAIFLSKFTNQLLASLLDLLIRIVTTLQQLLT.

Positions 1-24 (MQQPSQPTRESTKKPVPFQHEEYP) are disordered. Residues 34-56 (LYVLICLAIFLSKFTNQLLASLL) traverse the membrane as a helical segment.

It belongs to the Leviviricetes lysis protein family.

It localises to the host cell inner membrane. The protein resides in the host cell outer membrane. Induces the formation of specific membrane adhesion sites between the inner and outer membranes, apparently leading to host cell lysis. Lysis may be performed via activation of host murein hydrolases. This chain is Lysis protein, found in Enterobacteria phage fr (Bacteriophage fr).